A 354-amino-acid chain; its full sequence is uncharacterized protein (354 aa).

The next 9 helical transmembrane spans lie at 9 to 29 (MGKI…LIFS), 31 to 51 (ISIN…ISFT), 76 to 96 (NFGI…LIWV), 109 to 129 (FLNV…AIVV), 144 to 164 (IIFS…VLLI), 185 to 205 (GILV…ALGV), 278 to 298 (YGTL…GFFY), 306 to 326 (GIYL…IESG), and 327 to 347 (ILDI…IYAI).

Its subcellular location is the cell membrane. This is an uncharacterized protein from Methanocaldococcus jannaschii (strain ATCC 43067 / DSM 2661 / JAL-1 / JCM 10045 / NBRC 100440) (Methanococcus jannaschii).